Reading from the N-terminus, the 328-residue chain is Malate dehydrogenase (328 aa).

13 to 19 is an NAD(+) binding site; that stretch reads GGKGQIA. Residues Arg94 and Arg100 each coordinate substrate. NAD(+) is bound by residues Asn107, Gln114, and 131-133; that span reads VGN. Substrate-binding residues include Asn133 and Arg164. The active-site Proton acceptor is His189.

This sequence belongs to the LDH/MDH superfamily. MDH type 2 family.

The enzyme catalyses (S)-malate + NAD(+) = oxaloacetate + NADH + H(+). Catalyzes the reversible oxidation of malate to oxaloacetate. In Chlamydia pneumoniae (Chlamydophila pneumoniae), this protein is Malate dehydrogenase.